The chain runs to 256 residues: tRNA-cytidine(32) 2-sulfurtransferase (256 aa).

Residues 35–40 (SGGKDS) carry the PP-loop motif motif. [4Fe-4S] cluster-binding residues include Cys-110, Cys-113, and Cys-201.

Belongs to the TtcA family. Homodimer. It depends on Mg(2+) as a cofactor. Requires [4Fe-4S] cluster as cofactor.

The protein resides in the cytoplasm. It catalyses the reaction cytidine(32) in tRNA + S-sulfanyl-L-cysteinyl-[cysteine desulfurase] + AH2 + ATP = 2-thiocytidine(32) in tRNA + L-cysteinyl-[cysteine desulfurase] + A + AMP + diphosphate + H(+). It participates in tRNA modification. Its function is as follows. Catalyzes the ATP-dependent 2-thiolation of cytidine in position 32 of tRNA, to form 2-thiocytidine (s(2)C32). The sulfur atoms are provided by the cysteine/cysteine desulfurase (IscS) system. In Coxiella burnetii (strain Dugway 5J108-111), this protein is tRNA-cytidine(32) 2-sulfurtransferase.